Here is a 30-residue protein sequence, read N- to C-terminus: Bowman-Birk type proteinase inhibitor 3 (30 aa).

Cystine bridges form between Cys-9/Cys-24 and Cys-14/Cys-22.

Its function is as follows. Inhibits trypsin (IC(50)=4.90 nM) and, to a lesser extent, alpha-chymotrypsin (IC(50)=1.87 uM). The chain is Bowman-Birk type proteinase inhibitor 3 from Lathyrus sativus (White vetchling).